Consider the following 334-residue polypeptide: N-acetyl-gamma-glutamyl-phosphate reductase (334 aa).

Residue cysteine 154 is part of the active site.

This sequence belongs to the NAGSA dehydrogenase family. Type 1 subfamily.

Its subcellular location is the cytoplasm. The catalysed reaction is N-acetyl-L-glutamate 5-semialdehyde + phosphate + NADP(+) = N-acetyl-L-glutamyl 5-phosphate + NADPH + H(+). Its pathway is amino-acid biosynthesis; L-arginine biosynthesis; N(2)-acetyl-L-ornithine from L-glutamate: step 3/4. Catalyzes the NADPH-dependent reduction of N-acetyl-5-glutamyl phosphate to yield N-acetyl-L-glutamate 5-semialdehyde. The sequence is that of N-acetyl-gamma-glutamyl-phosphate reductase from Salmonella typhimurium (strain LT2 / SGSC1412 / ATCC 700720).